Consider the following 250-residue polypeptide: Cyclopentanol dehydrogenase (250 aa).

Residues M18, D37, D63, V64, N90, Y155, K159, I188, T190, and T193 each contribute to the NAD(+) site. Catalysis depends on Y155, which acts as the Proton acceptor.

This sequence belongs to the short-chain dehydrogenases/reductases (SDR) family.

The enzyme catalyses cyclopentanol + NAD(+) = cyclopentanone + NADH + H(+). It catalyses the reaction cyclohexanol + NAD(+) = cyclohexanone + NADH + H(+). Its pathway is alcohol metabolism; cyclopentanol degradation; 5-valerolactone from cyclopentanol: step 1/2. Its function is as follows. Catalyzes the oxidation of cyclopentanol to cyclopentanone and cyclohexanol to cyclohexanone. The activity toward cyclohexanol is 60% that of cyclopentanol. The sequence is that of Cyclopentanol dehydrogenase from Comamonas sp. (strain NCIMB 9872).